The primary structure comprises 214 residues: tRNA (guanine-N(7)-)-methyltransferase (214 aa).

4 residues coordinate S-adenosyl-L-methionine: Glu43, Glu68, Asp95, and Asp117. Residue Asp117 is part of the active site. Residues Lys121, Asp153, and 191–194 contribute to the substrate site; that span reads TEYE.

It belongs to the class I-like SAM-binding methyltransferase superfamily. TrmB family.

It carries out the reaction guanosine(46) in tRNA + S-adenosyl-L-methionine = N(7)-methylguanosine(46) in tRNA + S-adenosyl-L-homocysteine. Its pathway is tRNA modification; N(7)-methylguanine-tRNA biosynthesis. In terms of biological role, catalyzes the formation of N(7)-methylguanine at position 46 (m7G46) in tRNA. This chain is tRNA (guanine-N(7)-)-methyltransferase, found in Brevibacillus brevis (strain 47 / JCM 6285 / NBRC 100599).